A 648-amino-acid chain; its full sequence is Acyl-CoA-binding domain-containing protein 5 (648 aa).

Residues 13–107 (YPERFYAAAS…LEEADPGWYP (95 aa)) form the ACB domain. An acyl-CoA contacts are provided by residues lysine 34, 49–53 (YTLHQ), and lysine 75. Kelch repeat units follow at residues 196 to 244 (KMYM…KLTH), 256 to 306 (QLLS…LVGK), 307 to 357 (SLVI…VHAE), 359 to 408 (YLLI…TIGE), 409 to 457 (NWYI…LVVS), and 464 to 509 (IVVA…AVNN). Serine 517 carries the phosphoserine modification. Residues 520-632 (KVEGKADRII…AATMNAKRQS (113 aa)) adopt a coiled-coil conformation. Over residues 625 to 634 (TMNAKRQSSG) the composition is skewed to polar residues. The interval 625-648 (TMNAKRQSSGGVWGWLAGTPPPKT) is disordered.

This sequence belongs to the ACBP family. As to expression, expressed in roots, stems, leaves, flowers and siliques.

The protein localises to the cytoplasm. Binds medium- and long-chain acyl-CoA esters with very high affinity. Can interact in vitro with oleoyl-CoA, barely with palmitoyl-CoA, but not with arachidonyl-CoA. May function as an intracellular carrier of acyl-CoA esters. The polypeptide is Acyl-CoA-binding domain-containing protein 5 (ACBP5) (Arabidopsis thaliana (Mouse-ear cress)).